The sequence spans 383 residues: MRAYCVTSESVTEGHPDKVCDQISDGILDACLAQDPAARVAVETLVSGNTVFIAGEITTTARLDAVRTAREVIEDIGYADPALGFDSGSCFILTNLRTQSPDIDLGVSRGAELGAGDQGVLYGYACDETASLMPAPIHMAHGLSLRLAAARHGGVLPWLRPDGKTQVTVRYDGEGRPEALTSVIVSTQHDEGVDRETLVRGIIEAVIYPEVGGWLKPETRVLINPTGRFVIGGPAGDTGVTGRKLMVDTYGGCARHGGGAFSGKDSTKVDRTAAYMARYAAKNVVAAGLARRCEVALAYAIGERLPEMVSVETFGTETIDVDRLTAAVRETFPFSVSGMIAALDLRRPIFRKTAAYGHFGRENKGFQWEKTDRVDALRAVCGL.

Position 15 (His-15) interacts with ATP. Position 17 (Asp-17) interacts with Mg(2+). Residue Glu-43 coordinates K(+). The L-methionine site is built by Glu-56 and Gln-99. The interval 99–109 is flexible loop; the sequence is QSPDIDLGVSR. ATP-binding positions include 162-164, 228-229, Asp-237, 243-244, Ala-260, and Lys-264; these read DGK, RF, and RK. Asp-237 contributes to the L-methionine binding site. Lys-268 serves as a coordination point for L-methionine.

It belongs to the AdoMet synthase family. As to quaternary structure, homotetramer; dimer of dimers. The cofactor is Mg(2+). It depends on K(+) as a cofactor.

Its subcellular location is the cytoplasm. It carries out the reaction L-methionine + ATP + H2O = S-adenosyl-L-methionine + phosphate + diphosphate. Its pathway is amino-acid biosynthesis; S-adenosyl-L-methionine biosynthesis; S-adenosyl-L-methionine from L-methionine: step 1/1. Functionally, catalyzes the formation of S-adenosylmethionine (AdoMet) from methionine and ATP. The overall synthetic reaction is composed of two sequential steps, AdoMet formation and the subsequent tripolyphosphate hydrolysis which occurs prior to release of AdoMet from the enzyme. The chain is S-adenosylmethionine synthase 1 from Rhodospirillum rubrum (strain ATCC 11170 / ATH 1.1.1 / DSM 467 / LMG 4362 / NCIMB 8255 / S1).